Consider the following 484-residue polypeptide: DNA-binding protein (484 aa).

Residues 1 to 69 (MASNQHSQRE…ESAEEEEAEP (69 aa)) are disordered. Residues 51–60 (SMAAIPLSPE) are compositionally biased toward low complexity. Residue tyrosine 150 is modified to Phosphotyrosine; by host. Zn(2+) is bound by residues cysteine 239 and histidine 241. The interval 252–286 (VEMDVTSESGQRALKENPSKAKVAQNRWGRNVVQI) is flexible loop. Residues cysteine 294, cysteine 310, cysteine 351, cysteine 353, cysteine 405, and cysteine 421 each contribute to the Zn(2+) site. Positions 468–484 (ISLPTNHGDCREEPFDF) are C-terminal arm, DBP binding.

It belongs to the adenoviridae E2A DNA-binding protein family. In terms of assembly, homomultimerizes on viral ssDNA bound to pTP. Forms a initiation complex with viral polymerase, pTP and hosts NFIA and POU2F1/OCT1. Interacts with host SRCAP.

The protein resides in the host nucleus. In terms of biological role, plays a role in the elongation phase of viral strand displacement replication by unwinding the template in an ATP-independent fashion, employing its capacity to form multimers. Also enhances the rate of initiation. Released from template upon second strand synthesis. Assembles in complex with viral pTP, viral pol, host NFIA and host POU2F1/OCT1 on viral origin of replication. Covers the whole ssDNA genome during synthesis. The complementary strand synthesis induces its relese from DNA template. May inhibit cellular transcription mediated by the interaction between host SRCAP and CBP. In Human adenovirus A serotype 12 (HAdV-12), this protein is DNA-binding protein.